The primary structure comprises 203 residues: Thymidylate kinase (203 aa).

Residue 10-17 participates in ATP binding; it reads GIDGAGKS.

Belongs to the thymidylate kinase family.

It carries out the reaction dTMP + ATP = dTDP + ADP. Functionally, phosphorylation of dTMP to form dTDP in both de novo and salvage pathways of dTTP synthesis. The chain is Thymidylate kinase from Cupriavidus necator (strain ATCC 17699 / DSM 428 / KCTC 22496 / NCIMB 10442 / H16 / Stanier 337) (Ralstonia eutropha).